Reading from the N-terminus, the 427-residue chain is Glutamate-1-semialdehyde 2,1-aminomutase (427 aa).

K265 carries the N6-(pyridoxal phosphate)lysine modification.

Belongs to the class-III pyridoxal-phosphate-dependent aminotransferase family. HemL subfamily. As to quaternary structure, homodimer. Pyridoxal 5'-phosphate is required as a cofactor.

The protein localises to the cytoplasm. It carries out the reaction (S)-4-amino-5-oxopentanoate = 5-aminolevulinate. Its pathway is porphyrin-containing compound metabolism; protoporphyrin-IX biosynthesis; 5-aminolevulinate from L-glutamyl-tRNA(Glu): step 2/2. The polypeptide is Glutamate-1-semialdehyde 2,1-aminomutase (Shewanella amazonensis (strain ATCC BAA-1098 / SB2B)).